The sequence spans 499 residues: Glycerol kinase 2 (499 aa).

Position 13 (T13) interacts with ADP. ATP is bound by residues T13, T14, and S15. T13 is a binding site for sn-glycerol 3-phosphate. R17 is an ADP binding site. R83, E84, Y134, and D241 together coordinate sn-glycerol 3-phosphate. Residues R83, E84, Y134, D241, and Q242 each coordinate glycerol. The ADP site is built by T263 and G306. ATP-binding residues include T263, G306, Q310, and G407. Residue G407 participates in ADP binding.

This sequence belongs to the FGGY kinase family.

It carries out the reaction glycerol + ATP = sn-glycerol 3-phosphate + ADP + H(+). Its pathway is polyol metabolism; glycerol degradation via glycerol kinase pathway; sn-glycerol 3-phosphate from glycerol: step 1/1. In terms of biological role, key enzyme in the regulation of glycerol uptake and metabolism. Catalyzes the phosphorylation of glycerol to yield sn-glycerol 3-phosphate. In Saccharolobus solfataricus (strain ATCC 35092 / DSM 1617 / JCM 11322 / P2) (Sulfolobus solfataricus), this protein is Glycerol kinase 2.